The chain runs to 328 residues: Biotin synthase (328 aa).

The region spanning 49-273 (FNKEKIETCS…ICISRIIMPE (225 aa)) is the Radical SAM core domain. Cys67, Cys71, and Cys74 together coordinate [4Fe-4S] cluster. [2Fe-2S] cluster-binding residues include Ser110, Cys142, Cys201, and Arg277.

The protein belongs to the radical SAM superfamily. Biotin synthase family. In terms of assembly, homodimer. The cofactor is [4Fe-4S] cluster. [2Fe-2S] cluster serves as cofactor.

It catalyses the reaction (4R,5S)-dethiobiotin + (sulfur carrier)-SH + 2 reduced [2Fe-2S]-[ferredoxin] + 2 S-adenosyl-L-methionine = (sulfur carrier)-H + biotin + 2 5'-deoxyadenosine + 2 L-methionine + 2 oxidized [2Fe-2S]-[ferredoxin]. The protein operates within cofactor biosynthesis; biotin biosynthesis; biotin from 7,8-diaminononanoate: step 2/2. Its function is as follows. Catalyzes the conversion of dethiobiotin (DTB) to biotin by the insertion of a sulfur atom into dethiobiotin via a radical-based mechanism. The protein is Biotin synthase of Methanococcus vannielii (strain ATCC 35089 / DSM 1224 / JCM 13029 / OCM 148 / SB).